Consider the following 394-residue polypeptide: Elongation factor Tu (394 aa).

Residues 10 to 204 (KPHINVGTIG…FLDTYIPEPK (195 aa)) enclose the tr-type G domain. Residues 19-26 (GHVDHGKT) are G1. Residue 19-26 (GHVDHGKT) coordinates GTP. Mg(2+) is bound at residue T26. A G2 region spans residues 60-64 (GITIN). Residues 81-84 (DCPG) form a G3 region. GTP contacts are provided by residues 81–85 (DCPGH) and 136–139 (NKCD). The segment at 136-139 (NKCD) is G4. Positions 174–176 (SAL) are G5.

Belongs to the TRAFAC class translation factor GTPase superfamily. Classic translation factor GTPase family. EF-Tu/EF-1A subfamily. Monomer.

It is found in the cytoplasm. The enzyme catalyses GTP + H2O = GDP + phosphate + H(+). GTP hydrolase that promotes the GTP-dependent binding of aminoacyl-tRNA to the A-site of ribosomes during protein biosynthesis. This is Elongation factor Tu from Buchnera aphidicola subsp. Schizaphis graminum (strain Sg).